Reading from the N-terminus, the 154-residue chain is MKNVIIDLQIASEDATNLPSVEQIQLWANAAIRAENSQPEMTVRIVDEEESHHLNLTYRGKDKPTNVLSFPFECPDEIELPLIGDLVICRQVVEREATEQEKPLMAHWAHMIVHGSLHLLGYDHIEDDEAEEMERLETEIMLSLGFTDPYIIEK.

The Zn(2+) site is built by histidine 114, histidine 118, and histidine 124.

It belongs to the endoribonuclease YbeY family. Zn(2+) is required as a cofactor.

The protein resides in the cytoplasm. In terms of biological role, single strand-specific metallo-endoribonuclease involved in late-stage 70S ribosome quality control and in maturation of the 3' terminus of the 16S rRNA. The chain is Endoribonuclease YbeY from Histophilus somni (strain 2336) (Haemophilus somnus).